Consider the following 155-residue polypeptide: 6,7-dimethyl-8-ribityllumazine synthase (155 aa).

5-amino-6-(D-ribitylamino)uracil contacts are provided by residues Phe24, 58–60, and 82–84; these read AFE and AII. Position 87–88 (87–88) interacts with (2S)-2-hydroxy-3-oxobutyl phosphate; the sequence is AT. His90 serves as the catalytic Proton donor. Phe115 lines the 5-amino-6-(D-ribitylamino)uracil pocket. Position 129 (Arg129) interacts with (2S)-2-hydroxy-3-oxobutyl phosphate.

The protein belongs to the DMRL synthase family.

It carries out the reaction (2S)-2-hydroxy-3-oxobutyl phosphate + 5-amino-6-(D-ribitylamino)uracil = 6,7-dimethyl-8-(1-D-ribityl)lumazine + phosphate + 2 H2O + H(+). It participates in cofactor biosynthesis; riboflavin biosynthesis; riboflavin from 2-hydroxy-3-oxobutyl phosphate and 5-amino-6-(D-ribitylamino)uracil: step 1/2. Its function is as follows. Catalyzes the formation of 6,7-dimethyl-8-ribityllumazine by condensation of 5-amino-6-(D-ribitylamino)uracil with 3,4-dihydroxy-2-butanone 4-phosphate. This is the penultimate step in the biosynthesis of riboflavin. This is 6,7-dimethyl-8-ribityllumazine synthase from Prosthecochloris aestuarii (strain DSM 271 / SK 413).